The sequence spans 478 residues: Serine/threonine-protein phosphatase 2A activator 1 (478 aa).

Residues Asp359–Lys478 are disordered. Residues Ala396 to Ser419 are compositionally biased toward low complexity.

This sequence belongs to the PTPA-type PPIase family.

The protein resides in the cytoplasm. Its subcellular location is the nucleus. It carries out the reaction [protein]-peptidylproline (omega=180) = [protein]-peptidylproline (omega=0). Functionally, PPIases accelerate the folding of proteins. It catalyzes the cis-trans isomerization of proline imidic peptide bonds in oligopeptides. Acts as a regulatory subunit for PP2A-like phosphatases modulating their activity or substrate specificity, probably by inducing a conformational change in the catalytic subunit, a direct target of the PPIase. Can reactivate inactive phosphatase PP2A-phosphatase methylesterase complexes (PP2Ai) in presence of ATP and Mg(2+) by dissociating the inactive form from the complex. This Aspergillus oryzae (strain ATCC 42149 / RIB 40) (Yellow koji mold) protein is Serine/threonine-protein phosphatase 2A activator 1 (rrd1).